The following is a 514-amino-acid chain: Maturase K (514 aa).

It belongs to the intron maturase 2 family. MatK subfamily.

Its subcellular location is the plastid. The protein resides in the chloroplast. Its function is as follows. Usually encoded in the trnK tRNA gene intron. Probably assists in splicing its own and other chloroplast group II introns. The polypeptide is Maturase K (Phoenix dactylifera (Date palm)).